The primary structure comprises 290 residues: Cilia- and flagella-associated protein 298-A (290 aa).

It belongs to the CFAP298 family.

Its subcellular location is the cytoplasm. The protein localises to the cytoskeleton. The protein resides in the cilium basal body. Plays a role in motile cilium function, possibly by acting on outer dynein arm assembly. Seems to be important for initiation rather than maintenance of cilium motility. Required for correct positioning of the cilium at the apical cell surface, suggesting an additional role in the planar cell polarity (PCP) pathway. May suppress canonical Wnt signaling activity. The sequence is that of Cilia- and flagella-associated protein 298-A (cfap298-a) from Xenopus laevis (African clawed frog).